We begin with the raw amino-acid sequence, 109 residues long: Putative double-stranded DNA mimic protein CKO_01325 (109 aa).

This sequence belongs to the putative dsDNA mimic protein family.

Functionally, may act as a double-stranded DNA (dsDNA) mimic. Probably regulates the activity of a dsDNA-binding protein. The polypeptide is Putative double-stranded DNA mimic protein CKO_01325 (Citrobacter koseri (strain ATCC BAA-895 / CDC 4225-83 / SGSC4696)).